The sequence spans 700 residues: Elongation factor G (700 aa).

One can recognise a tr-type G domain in the interval 10–286; the sequence is KKVRNIGIMA…AVIDYLPSPL (277 aa). Residues 19–26, 83–87, and 137–140 contribute to the GTP site; these read AHIDAGKT, DTPGH, and NKMD.

This sequence belongs to the TRAFAC class translation factor GTPase superfamily. Classic translation factor GTPase family. EF-G/EF-2 subfamily.

It is found in the cytoplasm. Functionally, catalyzes the GTP-dependent ribosomal translocation step during translation elongation. During this step, the ribosome changes from the pre-translocational (PRE) to the post-translocational (POST) state as the newly formed A-site-bound peptidyl-tRNA and P-site-bound deacylated tRNA move to the P and E sites, respectively. Catalyzes the coordinated movement of the two tRNA molecules, the mRNA and conformational changes in the ribosome. The sequence is that of Elongation factor G from Nocardia farcinica (strain IFM 10152).